The primary structure comprises 360 residues: Putative transport protein BU123 (360 aa).

Transmembrane regions (helical) follow at residues 18 to 38, 39 to 59, 66 to 86, 161 to 181, 204 to 224, 230 to 250, 251 to 271, 280 to 300, and 316 to 336; these read IFIV…ILGF, FWAS…QKIL, AVII…FFLV, GLFI…YWNG, LLLA…TALI, GIGL…IIFF, SCLI…WLYW, ILLI…PFFI, and IGGL…VLVI.

It belongs to the autoinducer-2 exporter (AI-2E) (TC 2.A.86) family.

It localises to the cell membrane. This chain is Putative transport protein BU123, found in Buchnera aphidicola subsp. Acyrthosiphon pisum (strain APS) (Acyrthosiphon pisum symbiotic bacterium).